The primary structure comprises 171 residues: Adenine phosphoribosyltransferase (171 aa).

It belongs to the purine/pyrimidine phosphoribosyltransferase family. As to quaternary structure, homodimer.

It is found in the cytoplasm. The enzyme catalyses AMP + diphosphate = 5-phospho-alpha-D-ribose 1-diphosphate + adenine. It functions in the pathway purine metabolism; AMP biosynthesis via salvage pathway; AMP from adenine: step 1/1. Catalyzes a salvage reaction resulting in the formation of AMP, that is energically less costly than de novo synthesis. The protein is Adenine phosphoribosyltransferase (apt) of Prochlorococcus marinus subsp. pastoris (strain CCMP1986 / NIES-2087 / MED4).